A 310-amino-acid chain; its full sequence is Thioesterase pytI (310 aa).

2 helical membrane-spanning segments follow: residues 14-34 and 95-115; these read SLTP…YFAL and LLGG…IFVA. The disordered stretch occupies residues 168–195; sequence TLSDDASTTTSSDNSRASTDHGADSEVE. Positions 170-184 are enriched in low complexity; sequence SDDASTTTSSDNSRA.

It belongs to the AMT4 thioesterase family.

Its subcellular location is the membrane. The protein operates within secondary metabolite biosynthesis. Functionally, thioesterase; part of the gene cluster that mediates the biosynthesis of pyranterreones, a family of antioxidative compounds. The first step of pyranonigrins biosynthesis is performed by the hybrid PKS-NRPS synthetase pytA that condenses 4 malonyl-CoA units ato the acetyl starter unit by the modular PKS of pytA. The acyl chain is then connected to an L-serine through the amide bond by the modular NRPS of pytA. A tetramic acid is formed and released from the PKS-NRPS pytA to give pyranterreone 5 with the help of the thioesterase pytI. Pyranterreone 5 could be methylated by pytC to afford pyranterreone 6. Both pyranterreones 5 and 6 are subsequently oxidized by the FAD-linked oxidoreductase pytB and the cytochrome P450 monooxygenase pytD to form the fused gamma-pyrone core, resulting in pyranterreones 7 and 11, respectively. The hydroxy group at C-8 of pyranterreones 7 and 11 are dehydrated by the aspartyl protease pytH to form a delta-7 double bond to give pyranterreones 3 and 1, 2 accordingly. The exo-methylene of pyranterreone 3 could be reduced into a pendant methyl by reductase pytE to provide pyranterreone 4, also known as cordylactam. Pyranterreone 4 can be reconverted to pyranterreone 3 through pytB-catalyzed dehydrogenation or further oxidized to pyranterreones 9 and 10. This chain is Thioesterase pytI, found in Aspergillus terreus.